The primary structure comprises 262 residues: Zinc finger protein ehn-3 (262 aa).

C2H2-type zinc fingers lie at residues 2-24 (EKCDICHQKFSNKTNLNRHKVMH), 30-52 (FECQFCRRPFFRNDRMKEHMMTH), 59-84 (FECPITACNSKFNSFTSLQFHVDSEH), and 92-115 (AKCKSCIKWFNSSHRLLLHFHTAH). A disordered region spans residues 179–204 (SVKSAKELSPTPSTEIETPEEEELDG). Positions 185 to 194 (ELSPTPSTEI) are enriched in low complexity. The segment covering 195-204 (ETPEEEELDG) has biased composition (acidic residues). 2 C2H2-type zinc fingers span residues 208-230 (WYCDYCKIRFDDKVMWYLHSGLH) and 236-260 (FKCSLCGSLCDGKYDFAAHLVYANH).

Belongs to the krueppel C2H2-type zinc-finger protein family.

Its subcellular location is the nucleus. Its function is as follows. Together with the zinc finger protein ztf-16, plays a role in gonadogenesis, specifically in somatic gonad precursor cell development. This is possibly by regulating tra-1 gene expression. Required for proper gonadal primordium assembly and somatic gonad precursor cell morphology. This is Zinc finger protein ehn-3 from Caenorhabditis elegans.